A 282-amino-acid chain; its full sequence is Aquaporin NIP1-1 (282 aa).

The next 2 membrane-spanning stretches (helical) occupy residues I46 to I66 and I74 to V94. Residues N103–A105 carry the NPA 1 motif. A run of 3 helical transmembrane segments spans residues V125–G145, S162–T182, and A186–A206. Positions N215–A217 match the NPA 2 motif. The helical transmembrane segment at I232–L252 threads the bilayer.

Belongs to the MIP/aquaporin (TC 1.A.8) family. NIP (TC 1.A.8.12) subfamily.

It localises to the membrane. Its function is as follows. Aquaporins facilitate the transport of water and small neutral solutes across cell membranes. The polypeptide is Aquaporin NIP1-1 (NIP1-1) (Zea mays (Maize)).